The primary structure comprises 57 residues: Small ribosomal subunit protein bS21 (57 aa).

Residues 34 to 57 (RKEHYIKPSVQKKNRQKNMRSKKR) form a disordered region. Positions 43-57 (VQKKNRQKNMRSKKR) are enriched in basic residues.

This sequence belongs to the bacterial ribosomal protein bS21 family.

This chain is Small ribosomal subunit protein bS21, found in Aster yellows witches'-broom phytoplasma (strain AYWB).